The chain runs to 3023 residues: Genome polyprotein (3023 aa).

The Peptidase S30 domain occupies 132-274; it reads TCSSSGLDNL…QSITLRATHF (143 aa). Active-site for P1 proteinase activity residues include His-183, Asp-192, and Ser-225. Positions 325–328 match the Involved in interaction with stylet and aphid transmission motif; it reads KITC. The Involved in virions binding and aphid transmission signature appears at 583 to 585; it reads PTK. In terms of domain architecture, Peptidase C6 spans 609 to 731; it reads MYIAKEGYCY…ESPMAQYKVG (123 aa). Residues Cys-617 and His-690 each act as for helper component proteinase activity in the active site. The Helicase ATP-binding domain maps to 1202–1354; sequence QIAHNEHKDI…TQYPVELLIE (153 aa). Position 1215–1222 (1215–1222) interacts with ATP; that stretch reads GAVGSGKS. Residues 1304–1307 carry the DEFH box motif; the sequence is DEFH. A Helicase C-terminal domain is found at 1367 to 1532; it reads GTDAHADVVK…GLPVTTQNVS (166 aa). Residues 1796–1800 carry the GxxxG motif motif; that stretch reads GIGLG. A Nuclear localization signal motif is present at residues 1856 to 1863; sequence KKGKSKGK. Tyr-1878 carries the post-translational modification O-(5'-phospho-RNA)-tyrosine. Tyr-1878 carries the post-translational modification O-UMP-tyrosine; transient. The Peptidase C4 domain maps to 2002-2218; sequence SKALLKGVRD…ISWGSFTLVE (217 aa). Active-site for nuclear inclusion protein A activity residues include His-2047, Asp-2082, and Cys-2152. Positions 2484–2608 constitute a RdRp catalytic domain; the sequence is WVYCDADGSQ…AISPELEHVL (125 aa). Thr-3006 bears the Phosphothreonine mark.

This sequence belongs to the potyviridae genome polyprotein family. Interacts with host eIF4E protein (via cap-binding region); this interaction mediates the translation of the VPg-viral RNA conjugates. Part of a complex that comprises VPg, RNA, host EIF4E and EIF4G; this interaction mediates the translation of the VPg-viral RNA conjugates. Post-translationally, VPg is uridylylated by the polymerase and is covalently attached to the 5'-end of the genomic RNA. This uridylylated form acts as a nucleotide-peptide primer for the polymerase. Potyviral RNA is expressed as two polyproteins which undergo post-translational proteolytic processing. Genome polyprotein is processed by NIa-pro, P1 and HC-pro proteinases resulting in the production of at least ten individual proteins. P3N-PIPO polyprotein is cleaved by P1 and HC-pro proteinases resulting in the production of three individual proteins. The P1 proteinase and the HC-pro cleave only their respective C-termini autocatalytically. 6K1 is essential for proper proteolytic separation of P3 from CI.

It is found in the host cytoplasmic vesicle. The protein localises to the host nucleus. It localises to the virion. It catalyses the reaction RNA(n) + a ribonucleoside 5'-triphosphate = RNA(n+1) + diphosphate. It carries out the reaction Hydrolyzes glutaminyl bonds, and activity is further restricted by preferences for the amino acids in P6 - P1' that vary with the species of potyvirus, e.g. Glu-Xaa-Xaa-Tyr-Xaa-Gln-|-(Ser or Gly) for the enzyme from tobacco etch virus. The natural substrate is the viral polyprotein, but other proteins and oligopeptides containing the appropriate consensus sequence are also cleaved.. The enzyme catalyses Hydrolyzes a Gly-|-Gly bond at its own C-terminus, commonly in the sequence -Tyr-Xaa-Val-Gly-|-Gly, in the processing of the potyviral polyprotein.. Its function is as follows. Required for aphid transmission and also has proteolytic activity. Only cleaves a Gly-Gly dipeptide at its own C-terminus. Interacts with virions and aphid stylets. Acts as a suppressor of RNA-mediated gene silencing, also known as post-transcriptional gene silencing (PTGS), a mechanism of plant viral defense that limits the accumulation of viral RNAs. May have RNA-binding activity. Has helicase activity. It may be involved in replication. Functionally, indispensable for virus replication. Reduces the abundance of host transcripts related to jasmonic acid biosynthesis therefore altering the host defenses. In order to increase its own stability, decreases host protein degradation pathways. In terms of biological role, indispensable for virus replication. Its function is as follows. Mediates the cap-independent, EIF4E-dependent translation of viral genomic RNAs. Binds to the cap-binding site of host EIF4E and thus interferes with the host EIF4E-dependent mRNA export and translation. VPg-RNA directly binds EIF4E and is a template for transcription. Also forms trimeric complexes with EIF4E-EIF4G, which are templates for translation. Has RNA-binding and proteolytic activities. Main protease that processes most of the polyprotein cleavages. Functionally, an RNA-dependent RNA polymerase that plays an essential role in the virus replication. In terms of biological role, involved in aphid transmission, cell-to-cell and systemis movement, encapsidation of the viral RNA and in the regulation of viral RNA amplification. This chain is Genome polyprotein, found in Tobacco vein mottling virus (TVMV).